Consider the following 457-residue polypeptide: ATP synthase subunit beta (457 aa).

147-154 (GGAGVGKT) lines the ATP pocket.

It belongs to the ATPase alpha/beta chains family. F-type ATPases have 2 components, CF(1) - the catalytic core - and CF(0) - the membrane proton channel. CF(1) has five subunits: alpha(3), beta(3), gamma(1), delta(1), epsilon(1). CF(0) has three main subunits: a(1), b(2) and c(9-12). The alpha and beta chains form an alternating ring which encloses part of the gamma chain. CF(1) is attached to CF(0) by a central stalk formed by the gamma and epsilon chains, while a peripheral stalk is formed by the delta and b chains.

The protein localises to the cell inner membrane. The catalysed reaction is ATP + H2O + 4 H(+)(in) = ADP + phosphate + 5 H(+)(out). In terms of biological role, produces ATP from ADP in the presence of a proton gradient across the membrane. The catalytic sites are hosted primarily by the beta subunits. The chain is ATP synthase subunit beta from Haemophilus influenzae (strain 86-028NP).